We begin with the raw amino-acid sequence, 243 residues long: Carboxy-S-adenosyl-L-methionine synthase (243 aa).

S-adenosyl-L-methionine-binding positions include tyrosine 39, 64–66 (GCS), asparagine 132, and arginine 199.

The protein belongs to the class I-like SAM-binding methyltransferase superfamily. Cx-SAM synthase family. Homodimer.

It carries out the reaction prephenate + S-adenosyl-L-methionine = carboxy-S-adenosyl-L-methionine + 3-phenylpyruvate + H2O. Functionally, catalyzes the conversion of S-adenosyl-L-methionine (SAM) to carboxy-S-adenosyl-L-methionine (Cx-SAM). The polypeptide is Carboxy-S-adenosyl-L-methionine synthase (Alteromonas mediterranea (strain DSM 17117 / CIP 110805 / LMG 28347 / Deep ecotype)).